The following is a 482-amino-acid chain: Transcription factor Sox-9 (482 aa).

2 disordered regions span residues Met-1 to Asp-66 and Arg-160 to Val-274. The span at Ser-30 to Ser-41 shows a compositional bias: low complexity. Residues Asp-42 to Thr-52 are compositionally biased toward polar residues. Basic and acidic residues-rich tracts occupy residues Gly-56 to Asp-66 and Arg-160 to Tyr-174. Lys-61 is covalently cross-linked (Glycyl lysine isopeptide (Lys-Gly) (interchain with G-Cter in SUMO)). The dimerization (DIM) stretch occupies residues Glu-63–Pro-103. Positions Glu-63–Pro-103 are PQA. The HMG box DNA-binding region spans Val-105–Lys-173. Residues Ser-211–Glu-220 are compositionally biased toward polar residues. A transactivation domain (TAM) region spans residues Pro-224–Gly-308. 2 consecutive short sequence motifs (9aaTAD) follow at residues Ile-276 to Ser-285 and Asp-291 to Leu-299. The interval Phe-295–Ser-395 is disordered. Polar residues-rich tracts occupy residues Gly-308–Ala-326 and His-351–Arg-366. Residues Arg-366–Pro-482 form a transactivation domain (TAC) region. A Glycyl lysine isopeptide (Lys-Gly) (interchain with G-Cter in SUMO) cross-link involves residue Lys-370. Over residues Ser-375–Gln-390 the composition is skewed to low complexity. A 9aaTAD 3 motif is present at residues Ser-433–Tyr-441. Residues Pro-448–Pro-482 are disordered. The span at Gly-458–Pro-482 shows a compositional bias: polar residues.

As to quaternary structure, interacts with the sumoylation factors ube2i/ubc9 and sumo1. Post-translationally, sumoylated. Lys-370 is the major site of sumoylation, although sumoylation at Lys-61 also occurs. Sumoylation plays a key role in regulating formation of the neural crest and otic placode. As to expression, expressed in both male and female gonads from after metamorphosis through to adult stages. In the testis, expression is restricted to the supporting Sertoli-like cells. Conversely in the ovary, expression is localized to primary oocytes (at protein level). In developing limbs, expressed before chrondrocytes form (stage 52 tadpoles) and throughout the cartilaginous anlagen until stage 56, after which expression ceases in the enlarged cells of the diaphysis. At later stages, expression continues in the chondrocytes of the epiphysis and metaphysis, and weak expression is seen in most of the diaphysis.

The protein localises to the nucleus. The protein resides in the cytoplasm. In terms of biological role, transcription factor that plays a key role in chondrocytes differentiation and skeletal development. Specifically binds the 5'-ACAAAG-3' DNA motif present in enhancers and super-enhancers and promotes expression of genes important for chondrogenesis, including COL2A1. Plays a central role in successive steps of chondrocyte differentiation. Absolutely required for precartilaginous condensation, the first step in chondrogenesis during which skeletal progenitors differentiate into prechondrocytes. Together with SOX5 and SOX6, required for overt chondrogenesis when condensed prechondrocytes differentiate into early stage chondrocytes, the second step in chondrogenesis. Later, required to direct hypertrophic maturation and block osteoblast differentiation of growth plate chondrocytes: maintains chondrocyte columnar proliferation, delays prehypertrophy and then prevents osteoblastic differentiation of chondrocytes. Also required for chondrocyte hypertrophy, both indirectly, by keeping the lineage fate of chondrocytes, and directly, by remaining present in upper hypertrophic cells. Low lipid levels are the main nutritional determinant for chondrogenic commitment of skeletal progenitor cells: when lipids levels are low, FOXO transcription factors promote expression of SOX9, which induces chondrogenic commitment and suppresses fatty acid oxidation. In addition to cartilage development, also acts as a regulator of proliferation and differentiation in epithelial stem/progenitor cells. Unlikely to play a role in sex determination but may function during testicular and ovarian differentiation. This is Transcription factor Sox-9 from Xenopus tropicalis (Western clawed frog).